The primary structure comprises 171 residues: Co-chaperone protein HscB (171 aa).

The J domain maps to D2–L74.

This sequence belongs to the HscB family. Interacts with HscA and stimulates its ATPase activity. Interacts with IscU.

Its function is as follows. Co-chaperone involved in the maturation of iron-sulfur cluster-containing proteins. Seems to help targeting proteins to be folded toward HscA. The chain is Co-chaperone protein HscB from Salmonella paratyphi A (strain AKU_12601).